The following is a 506-amino-acid chain: Galactose/methyl galactoside import ATP-binding protein MglA (506 aa).

ABC transporter domains are found at residues 14-249 and 264-506; these read LEMK…VGRS and VMLE…SLYL. 46 to 53 serves as a coordination point for ATP; the sequence is GENGAGKS.

It belongs to the ABC transporter superfamily. Galactose/methyl galactoside importer (TC 3.A.1.2.3) family. As to quaternary structure, the complex is composed of one ATP-binding protein (MglA), two transmembrane proteins (MglC) and a solute-binding protein (MglB).

The protein resides in the cell inner membrane. It catalyses the reaction D-galactose(out) + ATP + H2O = D-galactose(in) + ADP + phosphate + H(+). The enzyme catalyses methyl beta-D-galactoside(out) + ATP + H2O = methyl beta-D-galactoside(in) + ADP + phosphate + H(+). In terms of biological role, part of the ABC transporter complex MglABC involved in galactose/methyl galactoside import. Responsible for energy coupling to the transport system. In Sodalis glossinidius (strain morsitans), this protein is Galactose/methyl galactoside import ATP-binding protein MglA.